The sequence spans 277 residues: MAVDMIVEPKWVVQNFGNIRILDASWTFKPKADVAEYKAKYYNKFGVGMNELKNPEYLAEHINGAAHFNFDIAYYPSEDERFTLYTPEEFSSYVKRLGVFNGDHLVIYGRGKDGGMAAASRAYWTFRYYGYTTVSVLNGGIEAFKLAQGVVQSDSKAEGIRCKDAIHFPIGEVCAAKGFKKKTDCDQAFAAKGIKVGDTVVISCGIGLSASAICLAAARSGIVAKLYNGGVHELAYKAPQHLNMRVTLLLHAITVLRCTYIHFTFLYAIVIKIERIV.

Rhodanese domains follow at residues 15 to 153 (NFGN…VVQS) and 155 to 243 (SKAE…QHLN). Residue C204 is the Cysteine persulfide intermediate of the active site.

It carries out the reaction thiosulfate + hydrogen cyanide = thiocyanate + sulfite + 2 H(+). This Caenorhabditis elegans protein is Putative thiosulfate sulfurtransferase mpst-4.